A 263-amino-acid polypeptide reads, in one-letter code: Glucosamine-6-phosphate deaminase (263 aa).

Asp72 serves as the catalytic Proton acceptor; for enolization step. The active-site For ring-opening step is Asp141. His143 serves as the catalytic Proton acceptor; for ring-opening step. Residue Glu148 is the For ring-opening step of the active site.

The protein belongs to the glucosamine/galactosamine-6-phosphate isomerase family. NagB subfamily.

The catalysed reaction is alpha-D-glucosamine 6-phosphate + H2O = beta-D-fructose 6-phosphate + NH4(+). It functions in the pathway amino-sugar metabolism; N-acetylneuraminate degradation; D-fructose 6-phosphate from N-acetylneuraminate: step 5/5. Its activity is regulated as follows. Allosterically activated by N-acetylglucosamine 6-phosphate (GlcNAc6P). In terms of biological role, catalyzes the reversible isomerization-deamination of glucosamine 6-phosphate (GlcN6P) to form fructose 6-phosphate (Fru6P) and ammonium ion. The chain is Glucosamine-6-phosphate deaminase from Porphyromonas gingivalis (strain ATCC BAA-308 / W83).